The following is a 1531-amino-acid chain: Multidrug resistance-associated protein 1 (1531 aa).

The Extracellular portion of the chain corresponds to 1–33; the sequence is MALRGFCSADGSDPLWDWNVTWNTSNPDFTKCF. N-linked (GlcNAc...) asparagine glycans are attached at residues Asn19 and Asn23. Residues 34 to 54 traverse the membrane as a helical segment; that stretch reads QNTVLVWVPCFYLWACFPFYF. Over 55–74 the chain is Cytoplasmic; it reads LYLSRHDRGYIQMTPLNKTK. A helical membrane pass occupies residues 75–95; it reads TALGFLLWIVCWADLFYSFWE. At 96 to 100 the chain is on the extracellular side; sequence RSRGI. The helical transmembrane segment at 101 to 121 threads the bilayer; it reads FLAPVFLVSPTLLGITMLLAT. Over 122–133 the chain is Cytoplasmic; the sequence is FLIQLERRKGVQ. Residues 134 to 154 traverse the membrane as a helical segment; it reads SSGIMLTFWLVALVCALAILR. The Extracellular segment spans residues 155–172; that stretch reads SKIMTALKEDAQVDLFRD. Residues 173–193 form a helical membrane-spanning segment; it reads ITFYVYFSLLLIQLVLSCFSD. Residues 194 to 316 are Cytoplasmic-facing; that stretch reads RSPLFSETIH…KEWNPSLFKV (123 aa). Residue Tyr277 is modified to Phosphotyrosine. Ser289 bears the Phosphoserine mark. Residues 317–337 traverse the membrane as a helical segment; the sequence is LYKTFGPYFLMSFFFKAIHDL. Residues 325-608 enclose the ABC transmembrane type-1 1 domain; the sequence is FLMSFFFKAI…LPMVISSIVQ (284 aa). Topologically, residues 338 to 363 are extracellular; the sequence is MMFSGPQILKLLIKFVNDTKAPDWQG. A helical transmembrane segment spans residues 364 to 384; it reads YFYTVLLFVTACLQTLVLHQY. Over 385–440 the chain is Cytoplasmic; it reads FHICFVSGMRIKTAVIGAVYRKALVITNSARKSSTVGEIVNLMSVDAQRFMDLATY. The chain crosses the membrane as a helical span at residues 441 to 461; the sequence is INMIWSAPLQVILALYLLWLN. The Extracellular segment spans residues 462–464; sequence LGP. A helical membrane pass occupies residues 465–485; sequence SVLAGVAVMVLMVPVNAVMAM. Over 486 to 547 the chain is Cytoplasmic; that stretch reads KTKTYQVAHM…VLKKSAYLSA (62 aa). Lys503 bears the N6-succinyllysine mark. A helical membrane pass occupies residues 548–568; it reads VGTFTWVCTPFLVALCTFAVY. Residues 569 to 590 are Extracellular-facing; that stretch reads VTIDENNILDAQTAFVSLALFN. Residues 591–611 form a helical membrane-spanning segment; that stretch reads ILRFPLNILPMVISSIVQASV. Residues 612–967 are Cytoplasmic-facing; it reads SLKRLRIFLS…VKLSVYWDYM (356 aa). The ABC transporter 1 domain occupies 644–868; the sequence is ITVRNATFTW…DGAFAEFLRT (225 aa). ATP-binding positions include Trp653, 678-685, and Gln713; that span reads GQVGCGKS. Ser905, Ser915, and Ser930 each carry phosphoserine. A helical transmembrane segment spans residues 968–988; the sequence is KAIGLFISFLSIFLFMCNHVS. In terms of domain architecture, ABC transmembrane type-1 2 spans 975–1256; the sequence is SFLSIFLFMC…LVRMSSEMET (282 aa). Topologically, residues 989–1025 are extracellular; the sequence is ALASNYWLSLWTDDPIVNGTQEHTKVRLSVYGALGIS. A glycan (N-linked (GlcNAc...) asparagine) is linked at Asn1006. The helical transmembrane segment at 1026–1046 threads the bilayer; it reads QGIAVFGYSMAVSIGGILASR. The Cytoplasmic portion of the chain corresponds to 1047–1089; the sequence is CLHVDLLHSILRSPMSFFERTPSGNLVNRFSKELDTVDSMIPE. A helical transmembrane segment spans residues 1090 to 1110; that stretch reads VIKMFMGSLFNVIGACIVILL. Ala1111 is a topological domain (extracellular). The chain crosses the membrane as a helical span at residues 1112 to 1132; that stretch reads TPIAAIIIPPLGLIYFFVQRF. The Cytoplasmic segment spans residues 1133-1203; the sequence is YVASSRQLKR…VANRWLAVRL (71 aa). The chain crosses the membrane as a helical span at residues 1204–1224; that stretch reads ECVGNCIVLFAALFAVISRHS. Topologically, residues 1225–1226 are extracellular; sequence LS. A helical membrane pass occupies residues 1227-1247; sequence AGLVGLSVSYSLQVTTYLNWL. Over 1248–1531 the chain is Cytoplasmic; the sequence is VRMSSEMETN…YSMAKDAGLV (284 aa). The ABC transporter 2 domain occupies 1293-1527; the sequence is VEFRNYCLRY…RGLFYSMAKD (235 aa). 1327–1334 is a binding site for ATP; sequence GRTGAGKS.

It belongs to the ABC transporter superfamily. ABCC family. Conjugate transporter (TC 3.A.1.208) subfamily. In terms of assembly, (Microbial infection) Interacts with human cytomegalovirus protein UL138; this interaction mediates MRP1 degradation via the lysosome. Lung, testis and peripheral blood mononuclear cells.

It is found in the cell membrane. It localises to the basolateral cell membrane. It catalyses the reaction ATP + H2O + xenobioticSide 1 = ADP + phosphate + xenobioticSide 2.. The catalysed reaction is an S-substituted glutathione(in) + ATP + H2O = an S-substituted glutathione(out) + ADP + phosphate + H(+). It carries out the reaction sphing-4-enine 1-phosphate(in) + ATP + H2O = sphing-4-enine 1-phosphate(out) + ADP + phosphate + H(+). The enzyme catalyses leukotriene C4(in) + ATP + H2O = leukotriene C4(out) + ADP + phosphate + H(+). It catalyses the reaction 17beta-estradiol 17-O-(beta-D-glucuronate)(in) + ATP + H2O = 17beta-estradiol 17-O-(beta-D-glucuronate)(out) + ADP + phosphate + H(+). The catalysed reaction is daunorubicin(in) + ATP + H2O = daunorubicin(out) + ADP + phosphate + H(+). It carries out the reaction vincristine(in) + ATP + H2O = vincristine(out) + ADP + phosphate + H(+). The enzyme catalyses 2',3'-cGAMP(in) + ATP + H2O = 2',3'-cGAMP(out) + ADP + phosphate + H(+). It catalyses the reaction S-[(2E,6E,10E)-geranylgeranyl]-L-glutathione(in) + ATP + H2O = S-[(2E,6E,10E)-geranylgeranyl]-L-glutathione(out) + ADP + phosphate + H(+). The catalysed reaction is prostaglandin A2-S-(R)-glutathione(in) + ATP + H2O = prostaglandin A2-S-(R)-glutathione(out) + ADP + phosphate + H(+). It carries out the reaction prostaglandin A2-S-(S)-glutathione(in) + ATP + H2O = prostaglandin A2-S-(S)-glutathione(out) + ADP + phosphate + H(+). MK 571 inhibits sphingosine 1-phosphate and leukotriene C4 export. Functionally, mediates export of organic anions and drugs from the cytoplasm. Mediates ATP-dependent transport of glutathione and glutathione conjugates, leukotriene C4, estradiol-17-beta-o-glucuronide, methotrexate, antiviral drugs and other xenobiotics. Confers resistance to anticancer drugs by decreasing accumulation of drug in cells, and by mediating ATP- and GSH-dependent drug export. Hydrolyzes ATP with low efficiency. Catalyzes the export of sphingosine 1-phosphate from mast cells independently of their degranulation. Participates in inflammatory response by allowing export of leukotriene C4 from leukotriene C4-synthesizing cells. Mediates ATP-dependent, GSH-independent cyclic GMP-AMP (cGAMP) export. Thus, by limiting intracellular cGAMP concentrations negatively regulates the cGAS-STING pathway. Exports S-geranylgeranyl-glutathione (GGG) in lymphoid cells and stromal compartments of lymphoid organs. ABCC1 (via extracellular transport) with GGT5 (via GGG catabolism) establish GGG gradients within lymphoid tissues to position P2RY8-positive lymphocytes at germinal centers in lymphoid follicles and restrict their chemotactic transmigration from blood vessels to the bone marrow parenchyma. Mediates basolateral export of GSH-conjugated R- and S-prostaglandin A2 diastereomers in polarized epithelial cells. The protein is Multidrug resistance-associated protein 1 of Homo sapiens (Human).